The chain runs to 299 residues: MMLIPTHHFRNIERKPEYLQPEKCVPPPYPGPVGTMWFIRDGCGIACAIVTWFLVLYAEFVVLFVMLIPSRDYVYSIINGIVFNLLAFLALASHCRAMLTDPGAVPKGNATKEFIESLQLKPGQVVYKCPKCCSIKPDRAHHCSVCKRCIRKMDHHCPWVNNCVGENNQKYFVLFTMYIALISLHALIMVGFHFLHCFEEDWTKCSSFSPPTTVILLILLCFEGLLFLIFTSVMFGTQVHSICTDETGIEQLKKEERRWAKKTKWMNMKAVFGHPFSLGWASPFATPDQGKADPYQYVV.

The Cytoplasmic segment spans residues 1–47; the sequence is MMLIPTHHFRNIERKPEYLQPEKCVPPPYPGPVGTMWFIRDGCGIAC. At tyrosine 18 the chain carries Phosphotyrosine. A helical membrane pass occupies residues 48 to 68; it reads AIVTWFLVLYAEFVVLFVMLI. Residues 69 to 72 are Extracellular-facing; that stretch reads PSRD. A helical transmembrane segment spans residues 73-93; the sequence is YVYSIINGIVFNLLAFLALAS. Residues 94–171 are Cytoplasmic-facing; sequence HCRAMLTDPG…NCVGENNQKY (78 aa). Residues 127–177 form the DHHC domain; it reads YKCPKCCSIKPDRAHHCSVCKRCIRKMDHHCPWVNNCVGENNQKYFVLFTM. A lipid anchor (S-palmitoyl cysteine) is attached at cysteine 146. Cysteine 157 functions as the S-palmitoyl cysteine intermediate in the catalytic mechanism. Residues 172–192 form a helical membrane-spanning segment; it reads FVLFTMYIALISLHALIMVGF. Residues 193–214 lie on the Extracellular side of the membrane; it reads HFLHCFEEDWTKCSSFSPPTTV. A helical membrane pass occupies residues 215–235; sequence ILLILLCFEGLLFLIFTSVMF. Topologically, residues 236–299 are cytoplasmic; it reads GTQVHSICTD…GKADPYQYVV (64 aa).

The protein belongs to the DHHC palmitoyltransferase family. As to quaternary structure, monomer. Homooligomers. The monomeric form has a higher catalytic activity. Forms heterooligomers with ZDHHC7. Interacts with TNFRSF10A. Post-translationally, autopalmitoylated. In terms of processing, phosphorylation by FGFR1 and SRC probably regulates the palmitoyltransferase activity. As to expression, widely expressed with significant expression in heart, lung, liver, skeletal muscle, kidney, testis, thymus, small intestine and leukocyte.

Its subcellular location is the golgi apparatus membrane. The enzyme catalyses L-cysteinyl-[protein] + hexadecanoyl-CoA = S-hexadecanoyl-L-cysteinyl-[protein] + CoA. It carries out the reaction L-cysteinyl-[protein] + tetradecanoyl-CoA = S-tetradecanoyl-L-cysteinyl-[protein] + CoA. The catalysed reaction is L-cysteinyl-[protein] + octadecanoyl-CoA = S-octadecanoyl-L-cysteinyl-[protein] + CoA. In terms of biological role, golgi-localized palmitoyltransferase that catalyzes the addition of palmitate onto various protein substrates. Has no stringent fatty acid selectivity and in addition to palmitate can also transfer onto target proteins myristate from tetradecanoyl-CoA and stearate from octadecanoyl-CoA. Plays an important role in G protein-coupled receptor signaling pathways involving GNAQ and potentially other heterotrimeric G proteins by regulating their dynamic association with the plasma membrane. Palmitoylates ITGA6 and ITGB4, thereby regulating the alpha-6/beta-4 integrin localization, expression and function in cell adhesion to laminin. Plays a role in the TRAIL-activated apoptotic signaling pathway most probably through the palmitoylation and localization to the plasma membrane of TNFRSF10A. In the brain, by palmitoylating the gamma subunit GABRG2 of GABA(A) receptors and regulating their postsynaptic accumulation, plays a role in synaptic GABAergic inhibitory function and GABAergic innervation. Palmitoylates the neuronal protein GAP43 which is also involved in the formation of GABAergic synapses. Palmitoylates NCDN thereby regulating its association with endosome membranes. Probably palmitoylates PRCD and is involved in its proper localization within the photoreceptor. Could mediate the palmitoylation of NCAM1 and regulate neurite outgrowth. Could palmitoylate DNAJC5 and regulate its localization to Golgi membranes. Also constitutively palmitoylates DLG4. May also palmitoylate SNAP25. Could palmitoylate the glutamate receptors GRIA1 and GRIA2 but this has not been confirmed in vivo. Could also palmitoylate the D(2) dopamine receptor DRD2. May also palmitoylate LAMTOR1, promoting its localization to lysosomal membranes. Palmitoylates the Toll-like receptor 9/TLR9 in the Golgi and thereby regulates TLR9 trafficking to endosomes. May palmitoylate CALHM1 and CALHM3 subunits of gustatory voltage-gated ion channels and modulate channel gating and kinetics. Its function is as follows. May also function as a calcium transporter. This Homo sapiens (Human) protein is Palmitoyltransferase ZDHHC3.